The primary structure comprises 852 residues: Lon protease homolog 2, peroxisomal (852 aa).

Ser-2 bears the N-acetylserine mark. The region spanning 13–222 (LPLLLTHESV…MTIPLLVRQI (210 aa)) is the Lon N-terminal domain. 375 to 382 (GPPGVGKT) is an ATP binding site. Residues 651-837 (LSQPGVAIGL…DEVLNAAFDG (187 aa)) form the Lon proteolytic domain. Active-site residues include Ser-743 and Lys-786. A Microbody targeting signal motif is present at residues 850–852 (SKL).

Belongs to the peptidase S16 family. As to quaternary structure, interacts with PEX5. Interacts with TYSND1. May interact with enzymes involved in beta-oxidation of fatty acids, including ACOX1/AOX.

It localises to the peroxisome matrix. The enzyme catalyses Hydrolysis of proteins in presence of ATP.. Functionally, ATP-dependent serine protease that mediates the selective degradation of misfolded and unassembled polypeptides in the peroxisomal matrix. Necessary for type 2 peroxisome targeting signal (PTS2)-containing protein processing and facilitates peroxisome matrix protein import. May indirectly regulate peroxisomal fatty acid beta-oxidation through degradation of the self-processed forms of TYSND1. This chain is Lon protease homolog 2, peroxisomal (Lonp2), found in Rattus norvegicus (Rat).